The chain runs to 248 residues: MAGHSKWSQIKRSKAVVDAKRGAVFTRLAREISVAARSGGDPNGNFQLRTAINKAKAARMPAANIERAIAKGSGHDQHGACQLEAIRYEGYGPGGVAVLIEALTDNRNRTAADLRLTFNKHGGKLGESGCVAYLFEQRSEVYLSAQSAQDGGKVSEDALLENLLELEADGYQLIDDGGAVVYGPFQALEGLQAGLRDQGWIIEGWEHCWRPLTTISQADQKSEDQCLQLLDALDELDDVHHISSNLES.

It belongs to the TACO1 family.

It localises to the cytoplasm. The sequence is that of Probable transcriptional regulatory protein P9303_05381 from Prochlorococcus marinus (strain MIT 9303).